Reading from the N-terminus, the 771-residue chain is MFVIKRNGYKENVMFDKITSRIRKLCYGLNTDHIDPIKIAMKVIQGIYNGVTTVELDTLAAEIAATCTTQHPDYAILAARIAISNLHKETKKLFSEVMEDLFNYVNPKNGKHSPIISSITMDIVNKYKDKLNSVIIYERDFSYNYFGFKTLEKSYLLKINNKIVERPQHMLMRVAVGIHQWDIDSAIETYNLLSEKWFTHASPTLFNAGTTRHQMSSCFLLNMIDDSIEGIYDTLKRCALISKMAGGIGLSISNIRASGSYISGTNGISNGIIPMLRVYNNTARYIDQGGNKRPGVMAIYLEPWHSDIMAFLDLKKNTGNDEHRTRDLFIALWIPDLFMKRVKDDGEWSLMCPDECPGLDNVWGDEFERLYTLYERERRYKCIIKARVVWKAIIESQIETGTPFILYKDACNKKSNQQNLGTIKCSNLCTEIIQYADANEVAVCNLASVALNMFVIDGRFDFLKLKDVVKVIVRNLNKIIDINYYPIPEAEISNKRHRPIGIGVQGLADAFILLNYPFDSLEAQDLNKKIFETIYYGALEASCKLAEKEGPYDTYVGSYASNGILQYDLWNVVPSDLWNWEPLKDKIRTYGLRNSLLVAPMPTASTAQILGNNESVEPYTSNIYTRRVLSGEFQVVNPHLLRVLTERKLWNDEIKNRIMVDGGSIQNTNLPEDIKRVYKTIWEIPQKTIIKMAADRGAFIDQSQSMNIHIADPSYSKLTSMHFYGWSLGLKTGMYYLRTKPASAPIQFTLDKDKIKPQVVCDSEICTSCSG.

The region spanning 1 to 92 is the ATP-cone domain; that stretch reads MFVIKRNGYK…ISNLHKETKK (92 aa). ATP-binding positions include 5-6, 11-17, T53, D57, and K88; these read KR and ENVMFDK. GDP is bound by residues S202 and S217. DTTP is bound by residues 226–228, K243, and R256; that span reads DSI. N427 serves as a coordination point for GDP. Catalysis depends on N427, which acts as the Proton acceptor. Catalysis depends on C429, which acts as the Cysteine radical intermediate. GDP contacts are provided by residues E431 and 603-606; that span reads TAST. The active-site Proton acceptor is E431.

Belongs to the ribonucleoside diphosphate reductase large chain family. In terms of assembly, interacts with RNR2/OPG047 subunit. It depends on Mg(2+) as a cofactor.

It catalyses the reaction a 2'-deoxyribonucleoside 5'-diphosphate + [thioredoxin]-disulfide + H2O = a ribonucleoside 5'-diphosphate + [thioredoxin]-dithiol. In terms of biological role, ribonucleoside-diphosphate reductase holoenzyme provides the precursors necessary for viral DNA synthesis. Allows virus growth in non-dividing cells. Catalyzes the biosynthesis of deoxyribonucleotides from the corresponding ribonucleotides. This Monkeypox virus protein is Ribonucleoside-diphosphate reductase large subunit (OPG080).